The primary structure comprises 360 residues: Phospho-N-acetylmuramoyl-pentapeptide-transferase (360 aa).

10 helical membrane-spanning segments follow: residues 25–45 (TGGA…WIID), 71–91 (TPTM…VLWA), 94–114 (LNPY…VGFY), 129–148 (SGRT…CYAL), 168–188 (TAIY…VGAG), 199–219 (GLAI…SYLA), 239–259 (LAVL…FNAP), 263–283 (IFMG…IAVA), 288–308 (FVLA…IVQV), and 337–357 (QIVI…LSTL).

The protein belongs to the glycosyltransferase 4 family. MraY subfamily. Mg(2+) serves as cofactor.

The protein localises to the cell inner membrane. It carries out the reaction UDP-N-acetyl-alpha-D-muramoyl-L-alanyl-gamma-D-glutamyl-meso-2,6-diaminopimeloyl-D-alanyl-D-alanine + di-trans,octa-cis-undecaprenyl phosphate = di-trans,octa-cis-undecaprenyl diphospho-N-acetyl-alpha-D-muramoyl-L-alanyl-D-glutamyl-meso-2,6-diaminopimeloyl-D-alanyl-D-alanine + UMP. The protein operates within cell wall biogenesis; peptidoglycan biosynthesis. Its function is as follows. Catalyzes the initial step of the lipid cycle reactions in the biosynthesis of the cell wall peptidoglycan: transfers peptidoglycan precursor phospho-MurNAc-pentapeptide from UDP-MurNAc-pentapeptide onto the lipid carrier undecaprenyl phosphate, yielding undecaprenyl-pyrophosphoryl-MurNAc-pentapeptide, known as lipid I. This chain is Phospho-N-acetylmuramoyl-pentapeptide-transferase, found in Rhodopseudomonas palustris (strain BisA53).